Consider the following 72-residue polypeptide: Large ribosomal subunit protein bL32 (72 aa).

It belongs to the bacterial ribosomal protein bL32 family.

The chain is Large ribosomal subunit protein bL32 from Dehalococcoides mccartyi (strain ATCC BAA-2100 / JCM 16839 / KCTC 5957 / BAV1).